Consider the following 1522-residue polypeptide: Lysophospholipase nte1 (1522 aa).

The disordered stretch occupies residues 1-24; that stretch reads MADGVTQVDSTGLHSFSPSPSLSS. Residues 1–65 are Cytoplasmic-facing; that stretch reads MADGVTQVDS…LPPVPTTMAG (65 aa). Positions 15–24 are enriched in low complexity; it reads SFSPSPSLSS. Residues 66 to 86 traverse the membrane as a helical segment; sequence WIGWVFSFFFQVIPSVLYWII. Topologically, residues 87 to 108 are lumenal; it reads TFSTITLPTWLFTLFSMSLTFT. Residues 109 to 129 traverse the membrane as a helical segment; it reads MNFTTLLLIVLAVVSTISWFI. Residues 130–1522 are Cytoplasmic-facing; sequence RYRFLNMYSR…RTLAPRRASI (1393 aa). Disordered regions lie at residues 308 to 384, 523 to 544, and 757 to 776; these read VPNS…SVHP, RAATVVTPESAPAEHDTYGVSP, and TTTANSVGAGGTAANDSRRR. The segment covering 369–381 has biased composition (basic residues); the sequence is ESRKHSSRKRRKS. A nucleoside 3',5'-cyclic phosphate contacts are provided by residues 680–800 and 840–960; these read GGTS…AVAS and RLTS…IAQR. The PNPLA domain maps to 1219–1383; that stretch reads LVLGGGGARG…IDNLTVDHMK (165 aa). Residues 1223-1228 carry the GXGXXG motif; that stretch reads GGGARG. Positions 1250 to 1254 match the GXSXG motif; that stretch reads GTSIG. Serine 1252 serves as the catalytic Nucleophile. The active-site Proton acceptor is aspartate 1370. The DGA/G signature appears at 1370–1372; sequence DGG. A disordered region spans residues 1501-1522; sequence LPEETEEKKKLQRTLAPRRASI.

This sequence belongs to the NTE family.

The protein localises to the endoplasmic reticulum membrane. The enzyme catalyses a 1-acyl-sn-glycero-3-phosphocholine + H2O = sn-glycerol 3-phosphocholine + a fatty acid + H(+). Inhibited by organophosphorus esters. Intracellular phospholipase B that catalyzes the double deacylation of phosphatidylcholine (PC) to glycerophosphocholine (GroPCho). Plays an important role in membrane lipid homeostasis. Responsible for the rapid PC turnover in response to inositol, elevated temperatures, or when choline is present in the growth medium. The protein is Lysophospholipase nte1 (nte1) of Aspergillus fumigatus (strain ATCC MYA-4609 / CBS 101355 / FGSC A1100 / Af293) (Neosartorya fumigata).